We begin with the raw amino-acid sequence, 159 residues long: 2-C-methyl-D-erythritol 2,4-cyclodiphosphate synthase (159 aa).

The a divalent metal cation site is built by aspartate 8 and histidine 10. Residues aspartate 8–histidine 10 and histidine 34–serine 35 each bind 4-CDP-2-C-methyl-D-erythritol 2-phosphate. Histidine 42 provides a ligand contact to a divalent metal cation. Residues aspartate 56 to glycine 58, phenylalanine 61 to aspartate 65, alanine 100 to leucine 106, threonine 132 to glutamate 135, phenylalanine 139, and arginine 142 each bind 4-CDP-2-C-methyl-D-erythritol 2-phosphate.

This sequence belongs to the IspF family. As to quaternary structure, homotrimer. It depends on a divalent metal cation as a cofactor.

It carries out the reaction 4-CDP-2-C-methyl-D-erythritol 2-phosphate = 2-C-methyl-D-erythritol 2,4-cyclic diphosphate + CMP. It functions in the pathway isoprenoid biosynthesis; isopentenyl diphosphate biosynthesis via DXP pathway; isopentenyl diphosphate from 1-deoxy-D-xylulose 5-phosphate: step 4/6. Involved in the biosynthesis of isopentenyl diphosphate (IPP) and dimethylallyl diphosphate (DMAPP), two major building blocks of isoprenoid compounds. Catalyzes the conversion of 4-diphosphocytidyl-2-C-methyl-D-erythritol 2-phosphate (CDP-ME2P) to 2-C-methyl-D-erythritol 2,4-cyclodiphosphate (ME-CPP) with a corresponding release of cytidine 5-monophosphate (CMP). The protein is 2-C-methyl-D-erythritol 2,4-cyclodiphosphate synthase of Escherichia coli O139:H28 (strain E24377A / ETEC).